A 770-amino-acid chain; its full sequence is uncharacterized protein (770 aa).

A signal peptide spans 1-24; the sequence is MVSAAWLRYPSLLTLGILVSRVAA. 4 N-linked (GlcNAc...) asparagine glycosylation sites follow: N78, N204, N533, and N638. The segment at 746–770 is disordered; it reads SWGTGQNDVPPSLGAGIKRDGLRFT.

This sequence belongs to the glycosyl hydrolase 92 family.

The protein localises to the secreted. This is an uncharacterized protein from Arthroderma benhamiae (strain ATCC MYA-4681 / CBS 112371) (Trichophyton mentagrophytes).